Consider the following 518-residue polypeptide: Pumilio homolog 14 (518 aa).

Disordered regions lie at residues 26 to 46 (TMASSSSQPQPISSPFHQPEN) and 77 to 114 (VGQNGDSIHLPRRTNQVFTGSSSGGAGDDNGYLLPPMG). Residues 29-44 (SSSSQPQPISSPFHQP) are compositionally biased toward low complexity. The 341-residue stretch at 178 to 518 (YTNRFGYEGY…GNKVLEKLNI (341 aa)) folds into the PUM-HD domain. One copy of the Pumilio 1; degenerate repeat lies at 206–235 (SAFAKDKEMSERLGMSIFQGTKETVDAIYN). Pumilio repeat units follow at residues 236–271 (GLIGDICELMVDPYGSDVVQLLMRRCSSEQIVQLVD), 275–313 (QQMFQFVNICIDSLGTNAIQVLLTCINERAKDQIPRIVD), 314–348 (VVRTVALQLSKSNHAIFVILACFRLFPLHCRLLLE), 349–387 (LIVQNCHQIAIDQHGCCLLQLCFNKDRVPNLEIRQRLIM), 388–423 (EAIANALRLCLNCYGNYVVQYIVELNNRYLIDALVR), 424–459 (QLIGNYAHLARNKYGSHAVQKLLKLRWIDSRVIVID), and 460–494 (LLREIDTLLLDPFGNYVIQTAWFVSKDDVRRMLRY).

It is found in the cytoplasm. It localises to the nucleus. In terms of biological role, sequence-specific RNA-binding protein that regulates translation and mRNA stability by binding the 3'-UTR of target mRNAs. This Arabidopsis thaliana (Mouse-ear cress) protein is Pumilio homolog 14 (APUM14).